Here is a 772-residue protein sequence, read N- to C-terminus: Probable serine/threonine-protein kinase HAL5-like (772 aa).

4 disordered regions span residues 1-102, 115-165, 185-241, and 344-396; these read MASS…TRHV, RAGT…EPNN, IDTQ…RSNT, and NADE…SANV. Residues 9–19 show a composition bias toward basic and acidic residues; that stretch reads SEPRISRESSL. Low complexity-rich tracts occupy residues 20–33 and 41–59; these read KRSL…KGLF and NTGP…ISTP. The span at 66 to 86 shows a compositional bias: basic and acidic residues; it reads TKDKQDRLKNLAANKEKELQT. Over residues 146–158 the composition is skewed to low complexity; the sequence is RQSSSNRSSSFSN. A compositionally biased stretch (basic residues) spans 202–212; that stretch reads RRSRSTQRKRL. Positions 454 to 758 constitute a Protein kinase domain; that stretch reads GKSIGIIGQG…VDSLLKSSWM (305 aa). ATP is bound by residues 460–468 and Lys-498; that span reads IGQGAYGVV. Asp-609 functions as the Proton acceptor in the catalytic mechanism.

The protein belongs to the protein kinase superfamily. CAMK Ser/Thr protein kinase family. NPR/HAL subfamily. HAL5 sub-subfamily.

The enzyme catalyses L-seryl-[protein] + ATP = O-phospho-L-seryl-[protein] + ADP + H(+). The catalysed reaction is L-threonyl-[protein] + ATP = O-phospho-L-threonyl-[protein] + ADP + H(+). The polypeptide is Probable serine/threonine-protein kinase HAL5-like (Kluyveromyces lactis (strain ATCC 8585 / CBS 2359 / DSM 70799 / NBRC 1267 / NRRL Y-1140 / WM37) (Yeast)).